The following is a 288-amino-acid chain: 33 kDa chaperonin (288 aa).

2 cysteine pairs are disulfide-bonded: C236–C238 and C269–C272.

Belongs to the HSP33 family. Under oxidizing conditions two disulfide bonds are formed involving the reactive cysteines. Under reducing conditions zinc is bound to the reactive cysteines and the protein is inactive.

It is found in the cytoplasm. Redox regulated molecular chaperone. Protects both thermally unfolding and oxidatively damaged proteins from irreversible aggregation. Plays an important role in the bacterial defense system toward oxidative stress. The protein is 33 kDa chaperonin of Lactococcus lactis subsp. lactis (strain IL1403) (Streptococcus lactis).